A 231-amino-acid polypeptide reads, in one-letter code: NADH-ubiquinone oxidoreductase chain 4 (231 aa).

Transmembrane regions (helical) follow at residues 1 to 21 (PIAGSMVLAAILLKLGGYGII), 34 to 54 (LFIPFITLALWGATLANLTCL), 61 to 80 (SLIAYSSISHMGLVVAAITI), 84 to 106 (WGLSGAMALMIAHGFTSSALFCL), 118 to 138 (VLILTRGLHNILPMATTWWLL), and 156 to 178 (LLIMSSLFNWCPTTIILLGLSML).

The protein belongs to the complex I subunit 4 family.

The protein resides in the mitochondrion membrane. The catalysed reaction is a ubiquinone + NADH + 5 H(+)(in) = a ubiquinol + NAD(+) + 4 H(+)(out). In terms of biological role, core subunit of the mitochondrial membrane respiratory chain NADH dehydrogenase (Complex I) that is believed to belong to the minimal assembly required for catalysis. Complex I functions in the transfer of electrons from NADH to the respiratory chain. The immediate electron acceptor for the enzyme is believed to be ubiquinone. The protein is NADH-ubiquinone oxidoreductase chain 4 (MT-ND4) of Azemiops feae (Fea's viper).